We begin with the raw amino-acid sequence, 1179 residues long: MANGGGGGGGSSGGGGGGGGGGSGLRMSSNIHASHLSLDASSSSSSSSSSSSSSSSSSSSSVHEPKMDALIIPVTMEVPCDSRGQRMWWAFLASSMVTFFGGLFIILLWRTLKYLWTVCCHCGGKAKEAQKINNGSSQADGTLKPVDEKEEAVAAEVGWMTSVKDWAGVMISAQTLTGRVLVVLVFALSIGALVIYFIDSSNPIESCQNFYKDFTLQIDMAFNVFFLLYFGLRFIAANDKLWFWLEVNSVVDFFTVPPVFVSVYLNRSWLGLRFLRALRLIQFSEILQFLNILKTSNSIKLVNLLSIFISTWLTAAGFIHLVENSGDPWENFQNNQALTYWECVYLLMVTMSTVGYGDVYAKTTLGRLFMVFFILGGLAMFASYVPEIIELIGNRKKYGGSYSAVSGRKHIVVCGHITLESVSNFLKDFLHKDRDDVNVEIVFLHNISPNLELEALFKRHFTQVEFYQGSVLNPHDLARVKIESADACLILANKYCADPDAEDASNIMRVISIKNYHPKIRIITQMLQYHNKAHLLNIPSWNWKEGDDAICLAELKLGFIAQSCLAQGLSTMLANLFSMRSFIKIEEDTWQKYYLEGVSNEMYTEYLSSAFVGLSFPTVCELCFVKLKLLMIAIEYKSANRESRILINPGNHLKIQEGTLGFFIASDAKEVKRAFFYCKACHDDITDPKRIKKCGCKRLEDEQPSTLSPKKKQRNGGMRNSPNSSPKLMRHDPLLIPGNDQIDNMDSNVKKYDSTGMFHWCAPKEIEKVILTRSEAAMTVLSGHVVVCIFGDVSSALIGLRNLVMPLRASNFHYHELKHIVFVGSIEYLKREWETLHNFPKVSILPGTPLSRADLRAVNINLCDMCVILSANQNNIDDTSLQDKECILASLNIKSMQFDDSIGVLQANSQGFTPPGMDRSSPDNSPVHGMLRQPSITTGVNIPIITELVNDTNVQFLDQDDDDDPDTELYLTQPFACGTAFAVSVLDSLMSATYFNDNILTLIRTLVTGGATPELEALIAEENALRGGYSTPQTLANRDRCRVAQLALLDGPFADLGDGGCYGDLFCKALKTYNMLCFGIYRLRDAHLSTPSQCTKRYVITNPPYEFELVPTDLIFCLMQFDHNAGQSRASLSHSSHSSQSSSKKSSSVHSIPSTANRQNRPKSRESRDKQKYVQEERL.

The span at 1–24 shows a compositional bias: gly residues; it reads MANGGGGGGGSSGGGGGGGGGGSG. Positions 1–62 are disordered; sequence MANGGGGGGG…SSSSSSSSSV (62 aa). Topologically, residues 1–87 are extracellular; that stretch reads MANGGGGGGG…VPCDSRGQRM (87 aa). The segment covering 41–61 has biased composition (low complexity); the sequence is SSSSSSSSSSSSSSSSSSSSS. A helical transmembrane segment spans residues 88–108; it reads WWAFLASSMVTFFGGLFIILL. Over 109 to 179 the chain is Cytoplasmic; the sequence is WRTLKYLWTV…MISAQTLTGR (71 aa). S-palmitoyl cysteine attachment occurs at residues C119, C120, and C122. A helical transmembrane segment spans residues 180–200; that stretch reads VLVVLVFALSIGALVIYFIDS. Topologically, residues 201–215 are extracellular; sequence SNPIESCQNFYKDFT. A helical transmembrane segment spans residues 216–236; it reads LQIDMAFNVFFLLYFGLRFIA. At 237 to 240 the chain is on the cytoplasmic side; the sequence is ANDK. Residues 241-261 traverse the membrane as a helical segment; the sequence is LWFWLEVNSVVDFFTVPPVFV. The Extracellular segment spans residues 262-265; the sequence is SVYL. A helical; Voltage-sensor transmembrane segment spans residues 266–286; that stretch reads NRSWLGLRFLRALRLIQFSEI. Residues 287–301 are Cytoplasmic-facing; it reads LQFLNILKTSNSIKL. The chain crosses the membrane as a helical span at residues 302–322; it reads VNLLSIFISTWLTAAGFIHLV. The Extracellular portion of the chain corresponds to 323 to 336; sequence ENSGDPWENFQNNQ. An intramembrane region (pore-forming) is located at residues 337 to 359; the sequence is ALTYWECVYLLMVTMSTVGYGDV. The short motif at 353–356 is the Selectivity for potassium element; the sequence is TVGY. At 360–368 the chain is on the extracellular side; that stretch reads YAKTTLGRL. Residues 369–389 form a helical membrane-spanning segment; the sequence is FMVFFILGGLAMFASYVPEII. Over 390–1179 the chain is Cytoplasmic; sequence ELIGNRKKYG…KQKYVQEERL (790 aa). The region spanning 408–550 is the RCK N-terminal 1 domain; the sequence is RKHIVVCGHI…WNWKEGDDAI (143 aa). Mg(2+)-binding residues include E440, Q463, and E465. The segment at 557-577 is segment S7; the sequence is LGFIAQSCLAQGLSTMLANLF. A segment S8 region spans residues 614-634; sequence LSFPTVCELCFVKLKLLMIAI. A heme-binding motif region spans residues 678 to 682; sequence CKACH. The segment at 702 to 730 is disordered; the sequence is EQPSTLSPKKKQRNGGMRNSPNSSPKLMR. T706 carries the phosphothreonine modification. Phosphoserine is present on residues S708, S721, and S725. Residues 780 to 800 form a segment S9 region; it reads VLSGHVVVCIFGDVSSALIGL. The RCK N-terminal 2 domain occupies 782-926; it reads SGHVVVCIFG…MDRSSPDNSP (145 aa). Position 913 is a phosphothreonine (T913). Residues S921 and S925 each carry the phosphoserine modification. Residues 946-968 carry the Calcium bowl motif; that stretch reads TELVNDTNVQFLDQDDDDDPDTE. Ca(2+) is bound by residues Q955, D958, D961, and D963. The tract at residues 975–995 is segment S10; that stretch reads FACGTAFAVSVLDSLMSATYF. A compositionally biased stretch (low complexity) spans 1129–1154; that stretch reads RASLSHSSHSSQSSSKKSSSVHSIPS. The interval 1129–1179 is disordered; the sequence is RASLSHSSHSSQSSSKKSSSVHSIPSTANRQNRPKSRESRDKQKYVQEERL. Basic and acidic residues predominate over residues 1163–1179; that stretch reads KSRESRDKQKYVQEERL. Phosphoserine is present on residues S1164 and S1167.

The protein belongs to the potassium channel family. Calcium-activated (TC 1.A.1.3) subfamily. KCa1.1/KCNMA1 sub-subfamily. Homotetramer; which constitutes the calcium-activated potassium channel. Interacts with beta subunits KCNMB1, KCNMB2, KCNMB3 and KCNMB4. Interacts with gamma subunits LRRC26, LRRC38, LRRC52 and LRRC55. Beta and gamma subunits are accessory, and modulate its activity. Interacts with RAB11B. Phosphorylated. Phosphorylation by kinases such as PKA and/or PKG. In smooth muscles, phosphorylation affects its activity. In terms of processing, palmitoylation by ZDHHC22 and ZDHHC23 within the intracellular linker between the S0 and S1 transmembrane domains regulates localization to the plasma membrane. Depalmitoylated by LYPLA1 and LYPLAL1, leading to retard exit from the trans-Golgi network.

It is found in the cell membrane. The protein localises to the endoplasmic reticulum membrane. It catalyses the reaction K(+)(in) = K(+)(out). Its activity is regulated as follows. Ethanol and carbon monoxide-bound heme increase channel activation. Heme inhibits channel activation. Functionally, potassium channel activated by both membrane depolarization or increase in cytosolic Ca(2+) that mediates export of K(+). It is also activated by the concentration of cytosolic Mg(2+). Its activation dampens the excitatory events that elevate the cytosolic Ca(2+) concentration and/or depolarize the cell membrane. It therefore contributes to repolarization of the membrane potential. Plays a key role in controlling excitability in a number of systems, such as regulation of the contraction of smooth muscle, the tuning of hair cells in the cochlea, regulation of transmitter release, and innate immunity. In smooth muscles, its activation by high level of Ca(2+), caused by ryanodine receptors in the sarcoplasmic reticulum, regulates the membrane potential. In cochlea cells, its number and kinetic properties partly determine the characteristic frequency of each hair cell and thereby helps to establish a tonotopic map. Kinetics of KCNMA1 channels are determined by alternative splicing, phosphorylation status and its combination with modulating beta subunits. Highly sensitive to both iberiotoxin (IbTx) and charybdotoxin (CTX). Its function is as follows. Potassium channel activated by both membrane depolarization or increase in cytosolic Ca(2+) that mediates export of K(+). In Oryctolagus cuniculus (Rabbit), this protein is Calcium-activated potassium channel subunit alpha-1 (KCNMA1).